The primary structure comprises 806 residues: MFVSYRWLQEYVDIKDVTAQELADKITKSGIEVEGVEVLNKGVKGVVVGHVLECEKHPEADKLSKCLIDIGEEEPVQIICGAANIAKGLKVPVAKVGAVLPGNFKIKKAKLRGEASHGMVCALQELGIDGKLVSKEYADGIFIFPSDAEVGADALEILNLHDEVLELGLTPNRADCLNMLGVAYEVAAIYGREVKLPAIDLQETAEKTSDYISVSVEAKEENPLYIAKMVKNVKIGPSPMWMQTRLMAAGIRPISNVVDITNYILMEYGQPLHAFDYDKLGSKEIVVRLAKEGEKIETLDDQERTLQSHHLVITNGTKALAVAGVMGGADSEVTNETVNVLIESAYFAGQTVRRTSKDLGLRSESSARFEKGIDPTRTFEAIQHAAALMAKYAGGEALEGVVEADNLQVQERTVSVTAEKVNRVLGTNISASEMGTMFTNLKFPFTEVEGTFHVNVPARRPDITISEDLVEEVGRLYGYDHIPVTLPSGTMTRGKLTAAQTKRRKVRRFLEGAGLYEAITYSLTSADKAKQYMVEPNEKAPVALALPMSEERSQLRLSLVPQLLEAVSYNVARKNDSVALYEVGSIFLPTEEGELPKEEQHLAGVMTGLALHHAWQGEKKVVDFFVVKGVLEGLFDVLGVSNQITYAPAKREGMHPGRTADIVLDGEVIGFIGQLHPEAEKQLDVKNTFVFELSLVKVFGTDAEETYYSAIPRFPSMTRDMAVVVTKETKAGEMKQVIAEAGGELLKDVTLFDLYEGEKMEEGKKSLAFSMNYFDPERTLTDEEVTEAHNRVLTAVEEKFGAELRK.

The tRNA-binding domain occupies 40–155 (NKGVKGVVVG…SDAEVGADAL (116 aa)). The 76-residue stretch at 409–484 (VQERTVSVTA…RLYGYDHIPV (76 aa)) folds into the B5 domain. 4 residues coordinate Mg(2+): Asp-462, Asp-468, Glu-471, and Glu-472. In terms of domain architecture, FDX-ACB spans 712 to 805 (PRFPSMTRDM…VEEKFGAELR (94 aa)).

The protein belongs to the phenylalanyl-tRNA synthetase beta subunit family. Type 1 subfamily. As to quaternary structure, tetramer of two alpha and two beta subunits. The cofactor is Mg(2+).

It localises to the cytoplasm. It carries out the reaction tRNA(Phe) + L-phenylalanine + ATP = L-phenylalanyl-tRNA(Phe) + AMP + diphosphate + H(+). The sequence is that of Phenylalanine--tRNA ligase beta subunit from Bacillus cereus (strain ZK / E33L).